Reading from the N-terminus, the 540-residue chain is Phosphoenolpyruvate carboxykinase (ATP) (540 aa).

Arginine 65 lines the substrate pocket. An N6-acetyllysine modification is found at lysine 87. Residues tyrosine 207 and lysine 213 each coordinate substrate. Residues lysine 213, histidine 232, and 248–256 each bind ATP; that span reads GLSGTGKTT. Mn(2+)-binding residues include lysine 213 and histidine 232. Residue aspartate 269 coordinates Mn(2+). ATP is bound by residues glutamate 297, arginine 333, 449–450, and threonine 455; that span reads RI. Arginine 333 lines the substrate pocket. Lysine 523 is modified (N6-acetyllysine).

The protein belongs to the phosphoenolpyruvate carboxykinase (ATP) family. As to quaternary structure, monomer. Requires Mn(2+) as cofactor.

The protein localises to the cytoplasm. It carries out the reaction oxaloacetate + ATP = phosphoenolpyruvate + ADP + CO2. The protein operates within carbohydrate biosynthesis; gluconeogenesis. Functionally, involved in the gluconeogenesis. Catalyzes the conversion of oxaloacetate (OAA) to phosphoenolpyruvate (PEP) through direct phosphoryl transfer between the nucleoside triphosphate and OAA. This is Phosphoenolpyruvate carboxykinase (ATP) from Escherichia coli O6:K15:H31 (strain 536 / UPEC).